A 229-amino-acid polypeptide reads, in one-letter code: All-trans retinoic acid-induced differentiation factor (229 aa).

An N-terminal signal peptide occupies residues 1–30; it reads MAPHDPGSLTTLVPWAAALLLALGVERALA. Over 31 to 199 the chain is Extracellular; sequence LPEICTQCPG…YKCMRQGSFS (169 aa). Asn44, Asn79, Asn157, and Asn168 each carry an N-linked (GlcNAc...) asparagine glycan. In terms of domain architecture, EGF-like spans 152-193; it reads QKNLCNNTGDPEMCPENGSCVPDGPGLLQCVCADGFHGYKCM. 3 cysteine pairs are disulfide-bonded: Cys156-Cys171, Cys165-Cys181, and Cys183-Cys192. Residues 200 to 220 traverse the membrane as a helical segment; that stretch reads LLMFFGILGATTLSVSILLWA. The Cytoplasmic segment spans residues 221–229; it reads TQRRKAKTS.

Interacts with NELL1; the interaction promotes osteoblastic differentiation and mineralization. Interacts with SLC37A3; the interaction is direct and both proteins are mutually dependent for their stability. In terms of tissue distribution, weakly expressed in hematopoietic cell lines.

The protein resides in the nucleus envelope. The protein localises to the cell membrane. Its subcellular location is the lysosome membrane. Its function is as follows. Promotes osteoblast cell differentiation and terminal mineralization. Plays a role in inducing the cell cycle arrest via inhibiting CCND1 expression in all-trans-retinoic acid (ATRA) signal pathway. In osteoclasts, forms a transporter complex with ATRAID for nitrogen-containing-bisphophonates (N-BPs) required for releasing N-BP molecules that have trafficked to lysosomes through fluid-phase endocytosis into the cytosol. This chain is All-trans retinoic acid-induced differentiation factor, found in Homo sapiens (Human).